The primary structure comprises 441 residues: Transcription factor TOXE (441 aa).

The interval 14–40 (TDINERRKLQNRVAQRKYRTRQKTRMK) is basic DNA-binding region. Residues 209-243 (FEPNDQRKTENLPREPCGSCPSSSHGYSPTSGNPS) are disordered. Over residues 212 to 221 (NDQRKTENLP) the composition is skewed to basic and acidic residues. Residues 228–241 (CPSSSHGYSPTSGN) show a composition bias toward polar residues. ANK repeat units lie at residues 289–318 (DQFS…PLDI), 322–351 (SGKT…EMLA), 355–384 (EGNS…SCRE), and 413–440 (EGMT…SANV).

This sequence belongs to the bZIP family. In terms of assembly, monomer.

Its subcellular location is the nucleus. Functionally, transcription factor, part of the diffuse TOX2 gene cluster that mediates the biosynthesis of the HC-toxin, cyclic tetrapeptide of structure cyclo(D-Pro-L-Ala-D-Ala-L-Aeo), where Aeo stands for 2-amino-9,10-epoxi-8-oxodecanoic acid. HC-toxin is a determinant of specificity and virulence in the interaction between the producing fungus and its host, maize. TOXE is a pathway-specific transcription factor which coordinates the expression of genes involved in HC-toxin biosynthesis. Binds to the tox-box, a 10-bp motif with the consensus 5'-ATCTCNCGNA-3', which is found in the promoter of all genes involved in HC-toxin biosynthesis. Required for pathogenicity of the fungus on maize. The sequence is that of Transcription factor TOXE from Cochliobolus carbonum (Maize leaf spot fungus).